Consider the following 621-residue polypeptide: MVLCPVIGKLLHKRVVLASASPRRQEILSNAGLRFEVVPSKFKEKLDKASFATPYGYAMETAKQKALEVANRLYQKDLRAPDVVIGADTIVTVGGLILEKPVDKQDAYRMLSRLSGREHSVFTGVAIVHCSSKDHQLDTRVSEFYEETKVKFSELSEELLWEYVHSGEPMDKAGGYGIQALGGMLVESVHGDFLNVVGFPLNHFCKQLVKLYYPPRPEDLRRSVKHDSIPAADTFEDLSDVEGGGSEPTQRDAGSRDEKAEAGEAGQATAEAECHRTRETLPPFPTRLLELIEGFMLSKGLLTACKLKVFDLLKDEAPQKAADIASKVDASACGMERLLDICAAMGLLEKTEQGYSNTETANVYLASDGEYSLHGFIMHNNDLTWNLFTYLEFAIREGTNQHHRALGKKAEDLFQDAYYQSPETRLRFMRAMHGMTKLTACQVATAFNLSRFSSACDVGGCTGALARELAREYPRMQVTVFDLPDIIELAAHFQPPGPQAVQIHFAAGDFFRDPLPSAELYVLCRILHDWPDDKVHKLLSRVAESCKPGAGLLLVETLLDEEKRVAQRALMQSLNMLVQTEGKERSLGEYQCLLELHGFHQVQVVHLGGVLDAILATKVAP.

Residues 11-223 (LHKRVVLASA…PPRPEDLRRS (213 aa)) form an MAF-like region. A Phosphoserine modification is found at Ser-21. Asp-88 (proton acceptor; for pyrophosphatase activity) is an active-site residue. Ser-228 carries the post-translational modification Phosphoserine. A Phosphothreonine modification is found at Thr-234. Positions 235–279 (FEDLSDVEGGGSEPTQRDAGSRDEKAEAGEAGQATAEAECHRTRE) are disordered. A Phosphoserine modification is found at Ser-239. The span at 249 to 262 (TQRDAGSRDEKAEA) shows a compositional bias: basic and acidic residues. Residues 277 to 621 (TRETLPPFPT…DAILATKVAP (345 aa)) are ASMT-like. At Ser-421 the chain carries Phosphoserine. Residues Asp-482, 508-510 (GDF), and Arg-525 contribute to the S-adenosyl-L-methionine site.

It in the N-terminal section; belongs to the Maf family. YhdE subfamily. The protein in the C-terminal section; belongs to the class I-like SAM-binding methyltransferase superfamily. Cation-independent O-methyltransferase family. As to quaternary structure, homodimer. It depends on a divalent metal cation as a cofactor. As to expression, widely expressed. In adult, highly expressed in pancreas, placenta, fibroblast, thymus, prostate, testis, ovary and colon. Expressed at lower levels in spleen, small intestine and leukocytes. In fetus, expressed at high levels in the lung and kidney and at lower level in brain and liver.

The catalysed reaction is dTTP + H2O = dTMP + diphosphate + H(+). The enzyme catalyses UTP + H2O = UMP + diphosphate + H(+). It carries out the reaction CTP + H2O = CMP + diphosphate + H(+). It catalyses the reaction psi-UTP + H2O = psi-UMP + diphosphate + H(+). The catalysed reaction is 5-methyl-UTP + H2O = 5-methyl-UMP + diphosphate + H(+). The enzyme catalyses 5-methyl-CTP + H2O = 5-methyl-CMP + diphosphate + H(+). In terms of biological role, nucleoside triphosphate pyrophosphatase that hydrolyzes dTTP and UTP. Can also hydrolyze CTP and the modified nucleotides pseudo-UTP, 5-methyl-UTP (m(5)UTP) and 5-methyl-CTP (m(5)CTP). Has weak activity with dCTP, 8-oxo-GTP and N(4)-methyl-dCTP. May have a dual role in cell division arrest and in preventing the incorporation of modified nucleotides into cellular nucleic acids. In addition, the presence of the putative catalytic domain of S-adenosyl-L-methionine binding in the C-terminal region argues for a methyltransferase activity. The chain is Probable bifunctional dTTP/UTP pyrophosphatase/methyltransferase protein (ASMTL) from Homo sapiens (Human).